An 80-amino-acid polypeptide reads, in one-letter code: SPbeta prophage-derived uncharacterized HTH-type transcriptional regulator YotL (80 aa).

Positions 12-67 (LNELMHEYSVSIEDLVECTGLSKQRINDYVGGFKSNMNIGTAMTFADAIGCSIEEL) constitute an HTH cro/C1-type domain. Positions 23 to 42 (IEDLVECTGLSKQRINDYVG) form a DNA-binding region, H-T-H motif.

This is SPbeta prophage-derived uncharacterized HTH-type transcriptional regulator YotL (yotL) from Bacillus subtilis (strain 168).